The chain runs to 120 residues: Prefoldin subunit beta (120 aa).

Belongs to the prefoldin subunit beta family. As to quaternary structure, heterohexamer of two alpha and four beta subunits.

The protein resides in the cytoplasm. Its function is as follows. Molecular chaperone capable of stabilizing a range of proteins. Seems to fulfill an ATP-independent, HSP70-like function in archaeal de novo protein folding. The protein is Prefoldin subunit beta of Methanospirillum hungatei JF-1 (strain ATCC 27890 / DSM 864 / NBRC 100397 / JF-1).